The following is a 385-amino-acid chain: Glucans biosynthesis protein C (385 aa).

10 consecutive transmembrane segments (helical) span residues 17–39 (AWLM…TWHV), 54–76 (FIHS…MLFL), 88–110 (VERV…FIML), 136–158 (LISH…WIFK), 179–198 (LSVI…RTIF), 213–235 (IVMQ…IFPH), 242–261 (TPSR…YLLN), 276–295 (SVIT…SFGH), 308–330 (FVNA…GAYI), and 334–356 (ITSN…IILY).

The protein belongs to the acyltransferase 3 family. OpgC subfamily.

It is found in the cell membrane. Its pathway is glycan metabolism; osmoregulated periplasmic glucan (OPG) biosynthesis. Its function is as follows. Necessary for the succinyl substitution of periplasmic glucans. Could catalyze the transfer of succinyl residues from the cytoplasmic side of the membrane to the nascent glucan backbones on the periplasmic side of the membrane. The protein is Glucans biosynthesis protein C of Escherichia coli O157:H7.